A 135-amino-acid chain; its full sequence is Class I hydrophobin dewB (135 aa).

The signal sequence occupies residues 1 to 17; the sequence is MKFIGLATLSLFALASA. Disulfide bonds link cysteine 35-cysteine 109, cysteine 43-cysteine 103, cysteine 44-cysteine 84, and cysteine 110-cysteine 128.

It belongs to the fungal hydrophobin family. In terms of assembly, self-assembles to form functional amyloid fibrils called rodlets. Self-assembly into fibrillar rodlets occurs spontaneously at hydrophobic:hydrophilic interfaces and the rodlets further associate laterally to form amphipathic monolayers.

It is found in the secreted. The protein resides in the spore wall. Aerial growth, conidiation, and dispersal of filamentous fungi in the environment rely upon a capability of their secreting small amphipathic proteins called hydrophobins (HPBs) with low sequence identity. Class I can self-assemble into an outermost layer of rodlet bundles on aerial cell surfaces, conferring cellular hydrophobicity that supports fungal growth, development and dispersal; whereas Class II form highly ordered films at water-air interfaces through intermolecular interactions but contribute nothing to the rodlet structure. DewB is a class I hydrophobin that contributes to the hydrophobicity of the spore surface. This is Class I hydrophobin dewB from Emericella nidulans (strain FGSC A4 / ATCC 38163 / CBS 112.46 / NRRL 194 / M139) (Aspergillus nidulans).